Here is a 548-residue protein sequence, read N- to C-terminus: Tyrosine-protein phosphatase non-receptor type 61F (548 aa).

Topologically, residues M1–S525 are cytoplasmic. The 264-residue stretch at F33–G296 folds into the Tyrosine-protein phosphatase domain. The interval K46–R65 is disordered. S83 is subject to Phosphoserine. Residue Y86 is modified to Phosphotyrosine. Residues D203, C237–R243, and Q281 contribute to the substrate site. Catalysis depends on C237, which acts as the Phosphocysteine intermediate. 3 short sequence motifs (PXXP motif (SH3-binding)) span residues P327–P330, P339–P342, and P394–P397. The interval E386–Q517 is disordered. A compositionally biased stretch (acidic residues) spans S404–T428. 2 short sequence motifs (PXXP motif (SH3-binding)) span residues P459–P462 and P480–P483. The segment covering K502–Q517 has biased composition (basic and acidic residues). Residues L526–T545 form a helical membrane-spanning segment. The Extracellular segment spans residues K546–G548.

The protein belongs to the protein-tyrosine phosphatase family. Non-receptor class 1 subfamily. As to quaternary structure, interacts (via C-terminus) with dock/dreadlocks; this interaction is independent of insulin stimulation and is required for dephosphorylation of the insulin-like receptor InR.

The protein resides in the cytoplasm. The protein localises to the membrane. Its subcellular location is the endomembrane system. It localises to the nucleus. It carries out the reaction O-phospho-L-tyrosyl-[protein] + H2O = L-tyrosyl-[protein] + phosphate. In terms of biological role, non-receptor protein tyrosine phosphatase. Required for maintaining dock/dreadlocks in its non-phosphorylated state. Negative regulator of InR/insulin-like receptor signaling through dephosphorylation of tyrosines when recruited by dock/dreadlocks. The polypeptide is Tyrosine-protein phosphatase non-receptor type 61F (Drosophila melanogaster (Fruit fly)).